A 157-amino-acid chain; its full sequence is 6,7-dimethyl-8-ribityllumazine synthase (157 aa).

Residues phenylalanine 24, 58-60, and 82-84 contribute to the 5-amino-6-(D-ribitylamino)uracil site; these read SFE and AVI. 87–88 serves as a coordination point for (2S)-2-hydroxy-3-oxobutyl phosphate; that stretch reads ET. Residue histidine 90 is the Proton donor of the active site. Phenylalanine 115 is a 5-amino-6-(D-ribitylamino)uracil binding site. Arginine 129 lines the (2S)-2-hydroxy-3-oxobutyl phosphate pocket.

Belongs to the DMRL synthase family.

The catalysed reaction is (2S)-2-hydroxy-3-oxobutyl phosphate + 5-amino-6-(D-ribitylamino)uracil = 6,7-dimethyl-8-(1-D-ribityl)lumazine + phosphate + 2 H2O + H(+). It participates in cofactor biosynthesis; riboflavin biosynthesis; riboflavin from 2-hydroxy-3-oxobutyl phosphate and 5-amino-6-(D-ribitylamino)uracil: step 1/2. In terms of biological role, catalyzes the formation of 6,7-dimethyl-8-ribityllumazine by condensation of 5-amino-6-(D-ribitylamino)uracil with 3,4-dihydroxy-2-butanone 4-phosphate. This is the penultimate step in the biosynthesis of riboflavin. The polypeptide is 6,7-dimethyl-8-ribityllumazine synthase (Thermus thermophilus (strain ATCC BAA-163 / DSM 7039 / HB27)).